The chain runs to 388 residues: MDSISVTNAKFCFDVFNEMKVHHVNENILYCPLSILTALAMVYLGARGNTESQMKKVLHFDSITGAGSTTDSQCGSSEYVHNLFKELLSEITRPNATYSLEIADKLYVDKTFSVLPEYLSCARKFYTGGVEEVNFKTAAEEARQLINSWVEKETNGQIKDLLVSSSIDFGTTMVFINTIYFKGIWKIAFNTEDTREMPFSMTKEESKPVQMMCMNNSFNVATLPAEKMKILELPYASGDLSMLVLLPDEVSGLERIEKTINFDKLREWTSTNAMAKKSMKVYLPRMKIEEKYNLTSILMALGMTDLFSRSANLTGISSVDNLMISDAVHGVFMEVNEEGTEATGSTGAIGNIKHSLELEEFRADHPFLFFIRYNPTNAILFFGRYWSP.

Cys74 and Cys121 are disulfide-bonded. N-linked (GlcNAc...) asparagine glycans are attached at residues Asn95, Asn215, Asn293, and Asn312.

Belongs to the serpin family. Ov-serpin subfamily. N-glycosylated on at least two Asn residues by ovomucoid type carbohydrate units. In terms of processing, the N-terminus is blocked. Major protein of egg white. Expressed in the magnum of the oviduct (at protein level).

It is found in the secreted. The sequence is that of Ovalbumin-related protein Y (SERPINB14B) from Gallus gallus (Chicken).